Here is a 376-residue protein sequence, read N- to C-terminus: Protein STRICTOSIDINE SYNTHASE-LIKE 2 (376 aa).

Positions Met1 to Gly23 are cleaved as a signal peptide. N-linked (GlcNAc...) asparagine glycosylation is found at Asn79 and Asn244.

The protein belongs to the strictosidine synthase family.

The protein resides in the vacuole. This Arabidopsis thaliana (Mouse-ear cress) protein is Protein STRICTOSIDINE SYNTHASE-LIKE 2.